The following is a 150-amino-acid chain: Transcription antitermination protein NusB (150 aa).

This sequence belongs to the NusB family.

Involved in transcription antitermination. Required for transcription of ribosomal RNA (rRNA) genes. Binds specifically to the boxA antiterminator sequence of the ribosomal RNA (rrn) operons. In Chloroflexus aggregans (strain MD-66 / DSM 9485), this protein is Transcription antitermination protein NusB.